Reading from the N-terminus, the 281-residue chain is Pantothenate synthetase (281 aa).

30-37 (MGNLHQGH) is a binding site for ATP. The active-site Proton donor is the H37. Q61 contacts (R)-pantoate. Q61 is a binding site for beta-alanine. Residue 148 to 151 (GQKD) coordinates ATP. Residue Q154 participates in (R)-pantoate binding. ATP-binding positions include A177 and 185-188 (LSSR).

Belongs to the pantothenate synthetase family. As to quaternary structure, homodimer.

It localises to the cytoplasm. It carries out the reaction (R)-pantoate + beta-alanine + ATP = (R)-pantothenate + AMP + diphosphate + H(+). It participates in cofactor biosynthesis; (R)-pantothenate biosynthesis; (R)-pantothenate from (R)-pantoate and beta-alanine: step 1/1. Its function is as follows. Catalyzes the condensation of pantoate with beta-alanine in an ATP-dependent reaction via a pantoyl-adenylate intermediate. This chain is Pantothenate synthetase, found in Acinetobacter baylyi (strain ATCC 33305 / BD413 / ADP1).